The following is a 740-amino-acid chain: Probable RNA-dependent RNA polymerase 1 (740 aa).

Belongs to the RdRP family.

The enzyme catalyses RNA(n) + a ribonucleoside 5'-triphosphate = RNA(n+1) + diphosphate. Probably involved in the RNA silencing pathway and required for the generation of small interfering RNAs (siRNAs). The polypeptide is Probable RNA-dependent RNA polymerase 1 (RDR1) (Oryza sativa subsp. japonica (Rice)).